The sequence spans 191 residues: MEYFDMRKMSVNLWRNAAGETREICTFPPAKRDFYWRASIASIAANGEFSLFPGMERIVTLLEGGEMLLESADRFNHTLKPLQPFAFAADQVVKAKLTAGQMSMDFNIMTRLDVCKAKVRIAERTFTTFGSRGGVVFVINGAWQLGDKLLTTDQGACWFDGRHTLRLLQPQGKLLFSEINWLAGHSPDQVQ.

The protein belongs to the Ves family.

The chain is Protein Ves from Escherichia coli O8 (strain IAI1).